The following is a 637-amino-acid chain: tRNA uridine 5-carboxymethylaminomethyl modification enzyme MnmG (637 aa).

Gly-14–Gly-19 is a binding site for FAD. Gly-279–Phe-293 provides a ligand contact to NAD(+).

The protein belongs to the MnmG family. As to quaternary structure, homodimer. Heterotetramer of two MnmE and two MnmG subunits. FAD serves as cofactor.

It is found in the cytoplasm. In terms of biological role, NAD-binding protein involved in the addition of a carboxymethylaminomethyl (cmnm) group at the wobble position (U34) of certain tRNAs, forming tRNA-cmnm(5)s(2)U34. The chain is tRNA uridine 5-carboxymethylaminomethyl modification enzyme MnmG from Desulfitobacterium hafniense (strain Y51).